Reading from the N-terminus, the 548-residue chain is Cytochrome P450 monooxygenase hepE (548 aa).

Residue Cys485 participates in heme binding.

It belongs to the cytochrome P450 family. Heme is required as a cofactor.

It participates in secondary metabolite biosynthesis. In terms of biological role, cytochrome P450 monooxygenase; part of the gene cluster that mediates the biosynthesis of heptelidic acid (HA), a sesquiterpene lactone that acts as an inhibitor of glyceraldehyde-3-phosphatedehydrogenase (GAPDH) and a growth inhibitor of the salt-tolerant lactic acid bacteria in soy sauce brewing. This Aspergillus oryzae (strain ATCC 42149 / RIB 40) (Yellow koji mold) protein is Cytochrome P450 monooxygenase hepE.